The sequence spans 288 residues: Transmembrane and coiled-coil domain-containing protein 5A (288 aa).

The stretch at 10-192 (KRNIISLNMD…ALFLEREVSK (183 aa)) forms a coiled coil. A helical transmembrane segment spans residues 224-244 (IFCCLFFITLFFIRLLSYMFF).

The protein belongs to the TMCO5 family.

The protein resides in the endoplasmic reticulum membrane. It is found in the nucleus membrane. The chain is Transmembrane and coiled-coil domain-containing protein 5A (TMCO5A) from Homo sapiens (Human).